The following is a 177-amino-acid chain: MSKSATSHFKRLPKGQNGGIELLLIHNVEHLGRQGDLVEVKAGYALNYLLPQGLATIATDHHKRMVEKHREKLRAIELEKLKSYREQADELAKQSITIEANANDEGHLYGSVGPHEIVDALKASGITLAQDQIRLEGPLKELGLYTVKIHLHSEVDASLKVWVVPTVAAEGGEPGAS.

Belongs to the bacterial ribosomal protein bL9 family.

In terms of biological role, binds to the 23S rRNA. The polypeptide is Large ribosomal subunit protein bL9 (Rhodopirellula baltica (strain DSM 10527 / NCIMB 13988 / SH1)).